We begin with the raw amino-acid sequence, 1050 residues long: Transcription intermediary factor 1-alpha (1050 aa).

A Glycyl lysine isopeptide (Lys-Gly) (interchain with G-Cter in SUMO2) cross-link involves residue Lys7. Residues 15–30 show a composition bias toward low complexity; that stretch reads ASAAASGGPSAAPSGE. Positions 15–44 are disordered; the sequence is ASAAASGGPSAAPSGENEAESRQGPDSERG. The segment covering 33 to 44 has biased composition (basic and acidic residues); it reads AESRQGPDSERG. Residues 56–82 form an RING-type zinc finger; the sequence is CAVCHQNIQSRAPKLLPCLHSFCQRCL. Residue Thr101 is modified to Phosphothreonine. Position 110 is a phosphoserine (Ser110). 2 B box-type zinc fingers span residues 158 to 211 and 218 to 259; these read KSNQ…VSPE and QRPV…YQFI. Cys163, Cys166, Cys187, and His200 together coordinate Zn(2+). Residue Lys205 forms a Glycyl lysine isopeptide (Lys-Gly) (interchain with G-Cter in SUMO2) linkage. Zn(2+) contacts are provided by Cys223, His226, Cys246, and His251. Residue Lys276 forms a Glycyl lysine isopeptide (Lys-Gly) (interchain with G-Cter in SUMO2) linkage. The stretch at 289–359 forms a coiled coil; sequence NQIQNRIIEV…AGLSKQLEHV (71 aa). Positions 429–456 are disordered; that stretch reads ESQPQMPKQNPVVEQNSQPPSGLSSNQL. A compositionally biased stretch (polar residues) spans 431 to 456; the sequence is QPQMPKQNPVVEQNSQPPSGLSSNQL. Glycyl lysine isopeptide (Lys-Gly) (interchain with G-Cter in SUMO2) cross-links involve residues Lys436 and Lys458. Arg469 is subject to Omega-N-methylarginine. 2 stretches are compositionally biased toward low complexity: residues 476-490 and 499-510; these read QVMAQRQQVQRRPAP and QGPIQQPSISHQ. The tract at residues 476–550 is disordered; the sequence is QVMAQRQQVQ…PPNQNIPRQA (75 aa). Pro residues predominate over residues 526–535; that stretch reads PNGPVLPPHP. Lys552 participates in a covalent cross-link: Glycyl lysine isopeptide (Lys-Gly) (interchain with G-Cter in SUMO2). The disordered stretch occupies residues 571–594; sequence ISSGQGTPSTTNSTSSTPSSPTIT. The span at 577–594 shows a compositional bias: low complexity; it reads TPSTTNSTSSTPSSPTIT. A Glycyl lysine isopeptide (Lys-Gly) (interchain with G-Cter in SUMO2) cross-link involves residue Lys641. A disordered region spans residues 643 to 712; that stretch reads TNIDHGQPRP…PAGADSTHKV (70 aa). Phosphoserine is present on residues Ser654, Ser660, and Ser667. Over residues 654 to 666 the composition is skewed to polar residues; that stretch reads SNRTVQSPNSSVP. Low complexity predominate over residues 685-707; it reads SPSASSVGSRGSSGSSSKPAGAD. Glycyl lysine isopeptide (Lys-Gly) (interchain with G-Cter in SUMO2) cross-links involve residues Lys702 and Lys711. A Glycyl lysine isopeptide (Lys-Gly) (interchain with G-Cter in SUMO1); alternate cross-link involves residue Lys723. A Glycyl lysine isopeptide (Lys-Gly) (interchain with G-Cter in SUMO2); alternate cross-link involves residue Lys723. Lys741 participates in a covalent cross-link: Glycyl lysine isopeptide (Lys-Gly) (interchain with G-Cter in SUMO2). Ser744 carries the post-translational modification Phosphoserine. The interval 754–779 is nuclear receptor binding site (NRBS); it reads NYPRSILTSLLLNSSQSSTSEETVLR. Residues 766 to 824 form a disordered region; that stretch reads NSSQSSTSEETVLRSDAPDSTGDQPGLHQDNSSNGKSEWLDPSQKSPLHVGETRKEDDP. A Phosphoserine; by ATM modification is found at Ser768. Lys801 is covalently cross-linked (Glycyl lysine isopeptide (Lys-Gly) (interchain with G-Cter in SUMO2)). Position 808 is a phosphoserine (Ser808). Lys810 participates in a covalent cross-link: Glycyl lysine isopeptide (Lys-Gly) (interchain with G-Cter in SUMO2). Ser811 bears the Phosphoserine mark. At Thr818 the chain carries Phosphothreonine. A PHD-type zinc finger spans residues 826 to 873; it reads EDWCAVCQNGGELLCCEKCPKVFHLSCHVPTLTNFPSGEWICTFCRDL. Residues 834-840 are interaction with histone H3 that is not methylated at 'Lys-4' (H3K4me0); it reads NGGELLC. Lys875 is covalently cross-linked (Glycyl lysine isopeptide (Lys-Gly) (interchain with G-Cter in SUMO2)). The short motif at 891–907 is the Nuclear localization signal element; that stretch reads KKKTEGLVKLTPIDKRK. The region spanning 899-1004 is the Bromo domain; it reads KLTPIDKRKC…NYFEELLKNL (106 aa). Residue Lys949 forms a Glycyl lysine isopeptide (Lys-Gly) (interchain with G-Cter in SUMO2) linkage. Residues 979–980 are interaction with histone H3 that is acetylated at 'Lys-23' (H3K23ac); the sequence is FN. Lys992 participates in a covalent cross-link: Glycyl lysine isopeptide (Lys-Gly) (interchain with G-Cter in SUMO2). The span at 1011–1026 shows a compositional bias: basic and acidic residues; the sequence is PKPEFRNESEDNKFSD. Residues 1011–1036 are disordered; the sequence is PKPEFRNESEDNKFSDDSDDDFVQPR. Phosphoserine occurs at positions 1019, 1025, and 1028. Lys1041 is covalently cross-linked (Glycyl lysine isopeptide (Lys-Gly) (interchain with G-Cter in SUMO2)). Phosphoserine is present on Ser1042.

Interacts with CARM1, NCOA2/GRIP1, PML, KAT5/TIP60, BRD7, CBX1, CBX3 and CBX5. Part of a coactivator complex containing TRIM24, NCOA2 and CARM1. Interacts with NR3C2/MCR. Interacts with the ligand-binding domain of estrogen receptors (in vitro). Interaction with DNA-bound estrogen receptors requires the presence of estradiol. Interacts with AR and p53/TP53. Interacts (via bromo domain) with histone H3 (via N-terminus), provided that it is not methylated at 'Lys-4' (H3K4me0). Does not interact with histone H3 that is methylated at 'Lys-4' (H3K4me1, H3K4me2 or H3K4me3). Interacts (via bromo domain) with histone H3 (via N-terminus) that is acetylated at 'Lys-23' (H3K23ac). Has the highest affinity for histone H3 that is both unmodified at 'Lys-4' (H3K4me0) and acetylated at 'Lys-23' (H3K23ac). Has very low affinity for histone H3 that is methylated at 'Lys-9' (H3K9me), or acetylated at both 'Lys-9' (H3K9ac) and 'Lys-14' (H3K14ac), or acetylated at 'Lys-27' (H3K27ac) (in vitro). Interacts with TRIM16. In terms of processing, phosphorylated at Ser-768 by ATM kinase induces ubiquitination and degradation during DNA damage. Sumoylated. Post-translationally, undergoes ubiquitination-mediated degradation in response to DNA damage.

It localises to the nucleus. It is found in the cytoplasm. The protein resides in the mitochondrion. The catalysed reaction is S-ubiquitinyl-[E2 ubiquitin-conjugating enzyme]-L-cysteine + [acceptor protein]-L-lysine = [E2 ubiquitin-conjugating enzyme]-L-cysteine + N(6)-ubiquitinyl-[acceptor protein]-L-lysine.. The protein operates within protein modification; protein ubiquitination. Functionally, transcriptional coactivator that interacts with numerous nuclear receptors and coactivators and modulates the transcription of target genes. Interacts with chromatin depending on histone H3 modifications, having the highest affinity for histone H3 that is both unmodified at 'Lys-4' (H3K4me0) and acetylated at 'Lys-23' (H3K23ac). Has E3 protein-ubiquitin ligase activity. During the DNA damage response, participates in an autoregulatory feedback loop with TP53. Early in response to DNA damage, ATM kinase phosphorylates TRIM24 leading to its ubiquitination and degradation. After sufficient DNA repair has occurred, TP53 activates TRIM24 transcription, ultimately leading to TRIM24-mediated TP53 ubiquitination and degradation. Plays a role in the regulation of cell proliferation and apoptosis, at least in part via its effects on p53/TP53 levels. Up-regulates ligand-dependent transcription activation by AR, GCR/NR3C1, thyroid hormone receptor (TR) and ESR1. Modulates transcription activation by retinoic acid (RA) receptors, including RARA. Plays a role in regulating retinoic acid-dependent proliferation of hepatocytes. Also participates in innate immunity by mediating the specific 'Lys-63'-linked ubiquitination of TRAF3 leading to activation of downstream signal transduction of the type I IFN pathway. Additionally, negatively regulates NLRP3/CASP1/IL-1beta-mediated pyroptosis and cell migration probably by ubiquitinating NLRP3. The sequence is that of Transcription intermediary factor 1-alpha (TRIM24) from Homo sapiens (Human).